We begin with the raw amino-acid sequence, 316 residues long: Ribosomal RNA small subunit methyltransferase H (316 aa).

S-adenosyl-L-methionine-binding positions include 35–37, D55, F84, D105, and Q112; that span reads AGH.

It belongs to the methyltransferase superfamily. RsmH family.

The protein resides in the cytoplasm. The enzyme catalyses cytidine(1402) in 16S rRNA + S-adenosyl-L-methionine = N(4)-methylcytidine(1402) in 16S rRNA + S-adenosyl-L-homocysteine + H(+). In terms of biological role, specifically methylates the N4 position of cytidine in position 1402 (C1402) of 16S rRNA. The protein is Ribosomal RNA small subunit methyltransferase H of Streptococcus suis (strain 05ZYH33).